Consider the following 189-residue polypeptide: UPF0301 protein RP032 (189 aa).

The protein belongs to the UPF0301 (AlgH) family.

This Rickettsia prowazekii (strain Madrid E) protein is UPF0301 protein RP032.